The primary structure comprises 277 residues: Chitosanase (277 aa).

The signal sequence occupies residues 1–35 (MKISMQKADFWKKAAISLLVFTMFFTLMMSETVFA). Glu54 (proton donor) is an active-site residue. Asp70 acts as the Nucleophile in catalysis.

The protein belongs to the glycosyl hydrolase 46 family.

The protein localises to the secreted. The catalysed reaction is Endohydrolysis of beta-(1-&gt;4)-linkages between D-glucosamine residues in a partly acetylated chitosan.. Aids in the defense against invading fungal pathogens by degrading their cell wall chitosan. This Bacillus subtilis (strain 168) protein is Chitosanase (csn).